A 601-amino-acid chain; its full sequence is Glutamine--fructose-6-phosphate aminotransferase [isomerizing] (601 aa).

C2 functions as the Nucleophile; for GATase activity in the catalytic mechanism. One can recognise a Glutamine amidotransferase type-2 domain in the interval C2 to D218. SIS domains follow at residues I284–R423 and I453–P591. Catalysis depends on K596, which acts as the For Fru-6P isomerization activity.

As to quaternary structure, homodimer.

The protein localises to the cytoplasm. The catalysed reaction is D-fructose 6-phosphate + L-glutamine = D-glucosamine 6-phosphate + L-glutamate. Catalyzes the first step in hexosamine metabolism, converting fructose-6P into glucosamine-6P using glutamine as a nitrogen source. This Staphylococcus epidermidis (strain ATCC 35984 / DSM 28319 / BCRC 17069 / CCUG 31568 / BM 3577 / RP62A) protein is Glutamine--fructose-6-phosphate aminotransferase [isomerizing].